A 208-amino-acid polypeptide reads, in one-letter code: Ypt/Rab-type GTPase ypt71 (208 aa).

GTP-binding positions include 17–23 (SGVGKTC), 33–40 (FSREYKAT), glycine 66, 124–127 (NQID), and 158–160 (SAK). The short motif at 37–45 (YKATIGADF) is the Effector region element. S-geranylgeranyl cysteine attachment occurs at residues cysteine 206 and cysteine 208. Cysteine 208 is subject to Cysteine methyl ester.

The protein belongs to the small GTPase superfamily. Rab family.

The protein localises to the vacuole membrane. Rab activation is generally mediated by a guanine exchange factor (GEF), while inactivation through hydrolysis of bound GTP is catalyzed by a GTPase activating protein (GAP). Ypt/Rab-type GTPases are key regulators of membrane trafficking and intracellular vesicular transport. They act as molecular switches that convert between GTP-bound and GDP-bound states, and regulate virtually all steps of membrane traffic from the formation of the transport vesicle at the donor membrane to its fusion at the target membrane. In the GDP-bound state, Ypt proteins are predominantly cytosolic, solubilized through the interaction with a GDP dissociation inhibitor (GDI). In the GTP-bound state, the proteins are membrane bound and interact with specific effector proteins that select cargo, promote vesicle movement, or verify the correct site of fusion. Act antagonistically to ypt7 in regulating vacuolar morphology, promoting vacuolar fission. The protein is Ypt/Rab-type GTPase ypt71 (ypt71) of Schizosaccharomyces pombe (strain 972 / ATCC 24843) (Fission yeast).